A 109-amino-acid polypeptide reads, in one-letter code: uncharacterized protein (109 aa).

Residues M1 to W25 form the signal peptide. The helical transmembrane segment at Y73–I95 threads the bilayer.

It is found in the membrane. This is an uncharacterized protein from Bacillus subtilis (strain 168).